We begin with the raw amino-acid sequence, 215 residues long: MPAFNRLLPLASLVLIYWVRVCFPVCVEVPSETEAVQGNSMKLRCISCMKREEVEATTVVEWFYRPEGGKDFLIYEYRNGHQEVESPFQGRLQWNGSKDLQDVSITVLNVTLNDSGLYTCNVSREFEFEAHRPFVKTTRLIPLRVTEEAGEDFTSVVSEIMMYILLVFLTLWLFIEMIYCYRKVSKAEEAAQENASDYLAIPSENKENSVVPVEE.

The first 24 residues, 1 to 24, serve as a signal peptide directing secretion; it reads MPAFNRLLPLASLVLIYWVRVCFP. One can recognise an Ig-like C2-type domain in the interval 25 to 138; sequence VCVEVPSETE…EAHRPFVKTT (114 aa). Topologically, residues 25–156 are extracellular; it reads VCVEVPSETE…EEAGEDFTSV (132 aa). 2 disulfides stabilise this stretch: C26–C48 and C45–C120. 4 N-linked (GlcNAc...) asparagine glycosylation sites follow: N95, N109, N113, and N121. The helical transmembrane segment at 157–178 threads the bilayer; sequence VSEIMMYILLVFLTLWLFIEMI. The Cytoplasmic portion of the chain corresponds to 179 to 215; the sequence is YCYRKVSKAEEAAQENASDYLAIPSENKENSVVPVEE.

Belongs to the sodium channel auxiliary subunit SCN3B (TC 8.A.17) family. In terms of assembly, a voltage-gated sodium (Nav) channel consists of an ion-conducting pore-forming alpha subunit functional on its own that is regulated by one or more beta subunits. Forms homodimers and homotrimers. SCN3B is non-covalently associated with alpha subunits and induces the formation of alpha subunit oligomers, including trimers. Interacts with SCN5A/Nav1.5; regulatory subunit of SCN5A/Nav1.5. Interacts with SCN7A/Nav2.1; probable regulatory subunit of SCN7A/Nav2.1. Interacts with SCN10A; regulatory subunit of SCN10A/Nav1.8. Interacts with NFASC; probably involved in targeting the sodium channels to the nodes of Ranvier. Intramolecular disulfide bonds favor the voltage-gated sodium channel oligomeric complex assembly. In terms of processing, N-glycosylated.

It is found in the cell membrane. In terms of biological role, regulatory subunit of multiple voltage-gated sodium (Nav) channels directly mediating the depolarization of excitable membranes. Navs, also called VGSCs (voltage-gated sodium channels) or VDSCs (voltage-dependent sodium channels), operate by switching between closed and open conformations depending on the voltage difference across the membrane. In the open conformation they allow Na(+) ions to selectively pass through the pore, along their electrochemical gradient. The influx of Na+ ions provokes membrane depolarization, initiating the propagation of electrical signals throughout cells and tissues. The accessory beta subunits participate in localization and functional modulation of the Nav channels. Modulates the activity of SCN2A/Nav1.2, causing a hyperpolarizing shift in the voltage-dependence of inactivation of the channel and increasing the fraction of channels operating in the fast gating mode. Modulates the activity of SCN5A/Nav1.5. Could also regulate the atypical sodium channel SCN7A/Nav2.1. Modulates the activity of SCN10A/Nav1.8, regulating its oligomerization and accelerating the recovery from inactivation. The chain is Sodium channel regulatory subunit beta-3 from Mus musculus (Mouse).